Consider the following 96-residue polypeptide: Small ribosomal subunit protein bS6 (96 aa).

The protein belongs to the bacterial ribosomal protein bS6 family.

Binds together with bS18 to 16S ribosomal RNA. The sequence is that of Small ribosomal subunit protein bS6 from Nocardioides sp. (strain ATCC BAA-499 / JS614).